Here is a 435-residue protein sequence, read N- to C-terminus: Cysteine--tRNA ligase (435 aa).

Residue C24 coordinates Zn(2+). A 'HIGH' region motif is present at residues 26–36 (PTVYDHIHIGN). Zn(2+) contacts are provided by C202, H228, and E232. A 'KMSKS' region motif is present at residues 260–264 (KMSKS). K263 lines the ATP pocket.

This sequence belongs to the class-I aminoacyl-tRNA synthetase family. Monomer. The cofactor is Zn(2+).

It is found in the cytoplasm. The catalysed reaction is tRNA(Cys) + L-cysteine + ATP = L-cysteinyl-tRNA(Cys) + AMP + diphosphate. This is Cysteine--tRNA ligase from Mycoplasmoides gallisepticum (strain R(low / passage 15 / clone 2)) (Mycoplasma gallisepticum).